Consider the following 241-residue polypeptide: Ribosomal RNA small subunit methyltransferase G (241 aa).

S-adenosyl-L-methionine is bound by residues Gly79, Phe84, 130 to 131 (AE), and Arg150.

The protein belongs to the methyltransferase superfamily. RNA methyltransferase RsmG family.

It is found in the cytoplasm. Specifically methylates the N7 position of a guanine in 16S rRNA. This is Ribosomal RNA small subunit methyltransferase G from Limosilactobacillus reuteri (strain DSM 20016) (Lactobacillus reuteri).